Reading from the N-terminus, the 576-residue chain is Septation ring formation regulator EzrA (576 aa).

Residues 1–7 are Extracellular-facing; that stretch reads MSSTVII. A helical transmembrane segment spans residues 8–26; that stretch reads LIVVLLVILVAFYAFAILM. At 27 to 576 the chain is on the cytoplasmic side; that stretch reads RKKTEDRILA…FKNKPTPDYL (550 aa). 3 coiled-coil regions span residues 105 to 134, 254 to 305, and 356 to 402; these read RARE…VAQL, ENVN…FERE, and GYQE…IEKN.

The protein belongs to the EzrA family.

Its subcellular location is the cell membrane. Its function is as follows. Negative regulator of FtsZ ring formation; modulates the frequency and position of FtsZ ring formation. Inhibits FtsZ ring formation at polar sites. Interacts either with FtsZ or with one of its binding partners to promote depolymerization. The chain is Septation ring formation regulator EzrA from Lactococcus lactis subsp. cremoris (strain MG1363).